A 72-amino-acid polypeptide reads, in one-letter code: Translation initiation factor IF-1 (72 aa).

The S1-like domain occupies 1 to 72; it reads MTKEEAIEVD…SRGRIMFRER (72 aa).

This sequence belongs to the IF-1 family. In terms of assembly, component of the 30S ribosomal translation pre-initiation complex which assembles on the 30S ribosome in the order IF-2 and IF-3, IF-1 and N-formylmethionyl-tRNA(fMet); mRNA recruitment can occur at any time during PIC assembly.

It is found in the cytoplasm. One of the essential components for the initiation of protein synthesis. Stabilizes the binding of IF-2 and IF-3 on the 30S subunit to which N-formylmethionyl-tRNA(fMet) subsequently binds. Helps modulate mRNA selection, yielding the 30S pre-initiation complex (PIC). Upon addition of the 50S ribosomal subunit IF-1, IF-2 and IF-3 are released leaving the mature 70S translation initiation complex. The polypeptide is Translation initiation factor IF-1 (Treponema pallidum (strain Nichols)).